Here is a 201-residue protein sequence, read N- to C-terminus: Holliday junction resolvase RecU (201 aa).

Residues Thr-85, Asp-87, Asp-100, and Gln-119 each contribute to the Mg(2+) site.

This sequence belongs to the RecU family. Mg(2+) serves as cofactor.

The protein localises to the cytoplasm. It carries out the reaction Endonucleolytic cleavage at a junction such as a reciprocal single-stranded crossover between two homologous DNA duplexes (Holliday junction).. In terms of biological role, endonuclease that resolves Holliday junction intermediates in genetic recombination. Cleaves mobile four-strand junctions by introducing symmetrical nicks in paired strands. Promotes annealing of linear ssDNA with homologous dsDNA. Required for DNA repair, homologous recombination and chromosome segregation. This Pediococcus pentosaceus (strain ATCC 25745 / CCUG 21536 / LMG 10740 / 183-1w) protein is Holliday junction resolvase RecU.